A 508-amino-acid polypeptide reads, in one-letter code: Nucleolar complex protein 4 homolog (508 aa).

3 helical membrane passes run 288–308, 341–361, and 367–387; these read VAYG…FILI, HLAD…AAFI, and LALT…CNLF.

This sequence belongs to the CBF/MAK21 family.

The protein localises to the nucleus membrane. It is found in the nucleus. It localises to the nucleolus. This is Nucleolar complex protein 4 homolog (NOC4L) from Gallus gallus (Chicken).